The primary structure comprises 203 residues: ATP-dependent Clp protease proteolytic subunit (203 aa).

The active-site Nucleophile is the Ser-107. Residue His-132 is part of the active site.

Belongs to the peptidase S14 family. Fourteen ClpP subunits assemble into 2 heptameric rings which stack back to back to give a disk-like structure with a central cavity, resembling the structure of eukaryotic proteasomes.

The protein resides in the cytoplasm. The catalysed reaction is Hydrolysis of proteins to small peptides in the presence of ATP and magnesium. alpha-casein is the usual test substrate. In the absence of ATP, only oligopeptides shorter than five residues are hydrolyzed (such as succinyl-Leu-Tyr-|-NHMec, and Leu-Tyr-Leu-|-Tyr-Trp, in which cleavage of the -Tyr-|-Leu- and -Tyr-|-Trp bonds also occurs).. Functionally, cleaves peptides in various proteins in a process that requires ATP hydrolysis. Has a chymotrypsin-like activity. Plays a major role in the degradation of misfolded proteins. This is ATP-dependent Clp protease proteolytic subunit from Shewanella sediminis (strain HAW-EB3).